Reading from the N-terminus, the 254-residue chain is PF03932 family protein CutC (254 aa).

It belongs to the CutC family.

The protein resides in the cytoplasm. The polypeptide is PF03932 family protein CutC (Yersinia pseudotuberculosis serotype O:1b (strain IP 31758)).